Here is a 131-residue protein sequence, read N- to C-terminus: Phosphoribosyl-AMP cyclohydrolase (131 aa).

A Mg(2+)-binding site is contributed by aspartate 76. Cysteine 77 contributes to the Zn(2+) binding site. The Mg(2+) site is built by aspartate 78 and aspartate 80. Zn(2+)-binding residues include cysteine 94 and cysteine 101.

The protein belongs to the PRA-CH family. In terms of assembly, homodimer. Mg(2+) is required as a cofactor. Requires Zn(2+) as cofactor.

The protein localises to the cytoplasm. The catalysed reaction is 1-(5-phospho-beta-D-ribosyl)-5'-AMP + H2O = 1-(5-phospho-beta-D-ribosyl)-5-[(5-phospho-beta-D-ribosylamino)methylideneamino]imidazole-4-carboxamide. Its pathway is amino-acid biosynthesis; L-histidine biosynthesis; L-histidine from 5-phospho-alpha-D-ribose 1-diphosphate: step 3/9. Functionally, catalyzes the hydrolysis of the adenine ring of phosphoribosyl-AMP. This chain is Phosphoribosyl-AMP cyclohydrolase, found in Stutzerimonas stutzeri (strain A1501) (Pseudomonas stutzeri).